Here is a 388-residue protein sequence, read N- to C-terminus: Acetate kinase (388 aa).

N8 serves as a coordination point for Mg(2+). K15 is an ATP binding site. Position 88 (R88) interacts with substrate. The active-site Proton donor/acceptor is the D144. Residues 202–206 (HLGNG), 276–278 (DMR), and 321–325 (GVGEN) each bind ATP. E375 contacts Mg(2+).

The protein belongs to the acetokinase family. In terms of assembly, homodimer. Mg(2+) is required as a cofactor. The cofactor is Mn(2+).

The protein localises to the cytoplasm. It catalyses the reaction acetate + ATP = acetyl phosphate + ADP. Its pathway is metabolic intermediate biosynthesis; acetyl-CoA biosynthesis; acetyl-CoA from acetate: step 1/2. Catalyzes the formation of acetyl phosphate from acetate and ATP. Can also catalyze the reverse reaction. The chain is Acetate kinase from Mycoplasmoides gallisepticum (strain R(low / passage 15 / clone 2)) (Mycoplasma gallisepticum).